The primary structure comprises 208 residues: Proheparin-binding EGF-like growth factor (208 aa).

Residues 1-23 form the signal peptide; it reads MKLLPSVVLKLFLAAVLSALVTG. Residues 24–62 constitute a propeptide that is removed on maturation; sequence ESLERLRRGLAAATSNPDPPTGTTNQLLPTGADRAQEVQ. At 24–160 the chain is on the extracellular side; the sequence is ESLERLRRGL…ENPLYTYDHT (137 aa). The tract at residues 82-103 is disordered; that stretch reads ALATPGKEKNGKKKRKGKGLGK. Threonine 85 carries O-linked (GalNAc...) threonine glycosylation. A compositionally biased stretch (basic residues) spans 91-102; it reads NGKKKRKGKGLG. One can recognise an EGF-like domain in the interval 104–144; the sequence is KRDPCLKKYKDYCIHGECRYLKELRIPSCHCLPGYHGQRCH. 3 disulfides stabilise this stretch: cysteine 108/cysteine 121, cysteine 116/cysteine 132, and cysteine 134/cysteine 143. The propeptide at 149-208 is C-terminal; that stretch reads PVENPLYTYDHTTVLAVVAVVLSSVCLLVIVGLLMFRYHRRGGYDLESEEKVKLGMASSH. The chain crosses the membrane as a helical span at residues 161 to 184; sequence TVLAVVAVVLSSVCLLVIVGLLMF. Over 185-208 the chain is Cytoplasmic; that stretch reads RYHRRGGYDLESEEKVKLGMASSH.

In terms of assembly, interacts with FBLN1. Interacts with EGFR and ERBB4. Post-translationally, O-glycosylated. In terms of tissue distribution, most abundant in skeletal muscle, lung, spleen brain and heart.

The protein localises to the secreted. It is found in the extracellular space. Its subcellular location is the cell membrane. In terms of biological role, growth factor that mediates its effects via EGFR, ERBB2 and ERBB4. Required for normal cardiac valve formation and normal heart function. Promotes smooth muscle cell proliferation. May be involved in macrophage-mediated cellular proliferation. It is mitogenic for fibroblasts, but not endothelial cells. It is able to bind EGF receptor/EGFR with higher affinity than EGF itself and is a far more potent mitogen for smooth muscle cells than EGF. Also acts as a diphtheria toxin receptor. This is Proheparin-binding EGF-like growth factor (Hbegf) from Rattus norvegicus (Rat).